The following is a 92-amino-acid chain: C-C motif chemokine 3 (92 aa).

Positions 1-23 (MKVSTTALAVLLCTMTLCNQVFS) are cleaved as a signal peptide. Disulfide bonds link Cys34–Cys57 and Cys35–Cys73.

The protein belongs to the intercrine beta (chemokine CC) family. In terms of assembly, self-associates. Also heterodimer of MIP-1-alpha(4-69) and MIP-1-beta(3-69). Interacts with CCR1. In terms of tissue distribution, expressed in lung, spleen, and pancreas.

The protein resides in the secreted. In terms of biological role, monokine with inflammatory and chemokinetic properties. Binds to CCR1, CCR4 and CCR5. One of the major HIV-suppressive factors produced by CD8+ T-cells. Recombinant MIP-1-alpha induces a dose-dependent inhibition of different strains of HIV-1, HIV-2, and simian immunodeficiency virus (SIV). This Mus musculus (Mouse) protein is C-C motif chemokine 3 (Ccl3).